Reading from the N-terminus, the 429-residue chain is Enolase (429 aa).

Residue Gln-164 coordinates (2R)-2-phosphoglycerate. Glu-206 acts as the Proton donor in catalysis. 3 residues coordinate Mg(2+): Asp-243, Glu-286, and Asp-313. Residues Lys-338, Arg-367, Ser-368, and Lys-389 each contribute to the (2R)-2-phosphoglycerate site. The Proton acceptor role is filled by Lys-338.

Belongs to the enolase family. In terms of assembly, homooctamer. Forms a ring-shaped particle. The cofactor is Mg(2+).

It is found in the cytoplasm. Its subcellular location is the secreted. The protein localises to the cell surface. The catalysed reaction is (2R)-2-phosphoglycerate = phosphoenolpyruvate + H2O. It participates in carbohydrate degradation; glycolysis; pyruvate from D-glyceraldehyde 3-phosphate: step 4/5. With respect to regulation, inhibited by fluoride and phosphate. Functionally, catalyzes the reversible conversion of 2-phosphoglycerate (2-PG) into phosphoenolpyruvate (PEP). It is essential for the degradation of carbohydrates via glycolysis. The chain is Enolase from Thermotoga maritima (strain ATCC 43589 / DSM 3109 / JCM 10099 / NBRC 100826 / MSB8).